We begin with the raw amino-acid sequence, 281 residues long: Dexamethasone-induced Ras-related protein 1 (281 aa).

Cys11 is subject to S-nitrosocysteine. Residue 31 to 38 coordinates GTP; it reads GSSKVGKT. The short motif at 53-61 is the Effector region element; that stretch reads YTPTIEDFH. GTP contacts are provided by residues 78 to 82 and 145 to 148; these read DTSGN and NKGD. Cys278 bears the Cysteine methyl ester mark. Cys278 is lipidated: S-farnesyl cysteine. A propeptide spans 279–281 (removed in mature form); the sequence is VIS.

The protein belongs to the small GTPase superfamily. RasD family. In terms of assembly, forms a ternary complex with CAPON and NOS1. Component of a complex, at least composed of APBB1, RASD1/DEXRAS1 and APP. Interacts with APBB1/FE65. S-nitrosylation stimulates guanine-nucleotide exchange activity. Expressed in a variety of tissues including heart, cardiovascular tissues, brain, placenta, lung, liver, skeletal muscle, kidney, pancreas, gastrointestinal and reproductive tissues.

Its subcellular location is the cell membrane. It is found in the cytoplasm. The protein resides in the perinuclear region. It localises to the nucleus. Its function is as follows. Small GTPase. Negatively regulates the transcription regulation activity of the APBB1/FE65-APP complex via its interaction with APBB1/FE65. The polypeptide is Dexamethasone-induced Ras-related protein 1 (RASD1) (Homo sapiens (Human)).